The chain runs to 3354 residues: MRYSLVTCYAVLWLLMLVPGSWGQVNRLPFFTNHFFDTYLLISEDTPVGSSVTQLLARDMDNDPLVFGVSGEEASRFFAVEPDTGVVWLRQPLDRETKSEFTVEFSVSDHQGVITRKVNIQVGDVNDNAPTFHNQPYSVRIPENTPVGTPIFIVNATDPDLGAGGSVLYSFQPPSPFFAIDSARGIVTVIQELDYEVTQAYQLTVNATDQDKTRPLSTLANLAIIITDMQDMDPIFINLPYSTNIYEHSPPGTTVRVITAVDQDKGRPRGIGYTIVSGNTNSIFALDYISGALTLNGLLDRENPLYSHGFILTVKGTELNDDRTPSDATVTTTFNILVIDINDNAPEFNSSEYSVAITELAQVGFALPLFIQVVDKDEDLGLNSMFEVYLVGNNSHHFIISPTSVQGKADIRIRVAIPLDYETVDRYDFDLFANESVPDHVGYAKVKITLINENDNRPIFSQPLYNVSLYENITVGTSVLTVLATDNDVGTFGEVNYFFSDDPDRFSLDKDTGLIMLIARLDYELIQRFTLTVIARDGGGEETTGRVRINVLDVNDNVPTFQKDAYVGALRENEPSVTQLVRLRATDEDSPPNNLITYSIVNASAFGSYFDISIYEGYGVISVSRPLDYEQIPNGLIYLTVMAKDAGNPPLYSTVPVTIEVFDENDNPPTFSKPAYFVSVLENIMAGATVLFLNATDLDRSREYGQESIIYSLEGSSQFRINARSGEITTTSLLDRETKSEYILIVRAVDGGVGHNQKTGIATVNVTLLDINDNHPTWKDAPYYINLVEMTPPDSDVTTVVAVDPDLGENGTLVYSIHPPNKFYSLNSTTGKIRTTHVMLDRENPDPVEAELMRKIIVSVTDCGRPPLKATSSATVFVNLLDLNDNDPTFRNLPFVAEILEGTPAGVSVYQVVAIDLDEGLNGLVSYRMQVGMPRMDFVINSTSGVVTTTAELDRERIAEYQLRVVASDAGTPTKSSTSTLTVRVLDVNDETPTFFPAVYNVSVSEDVPREFRVVWLNCTDNDVGLNAELSYFITAGNVDGKFSVGYRDAVVRTVVGLDRETTAAYTLVLEAIDNGPVGKRRTGTATVFVTVLDVNDNRPIFLQSSYEASVPEDIPEGHSIVQLKATDADEGEFGRVWYRILHGNHGNNFRIHVGSGLLMRGPRPLDRERNSSHVLMVEAYNHDLGPMRSSVRVIVYVEDVNDEAPVFTQQQYNRLGLRETAGIGTSVIVVRATDKDTGDGGLVNYRILSGAEGKFEIDESTGLIVTVDYLDYETKTSYLMNVSATDGAPPFNQGFCSVYVTLLNELDEAVQFSNASYEAVIMENLALGTEIVRVQAYSIDNLNQITYRFDAYTSAQAKALFKIDAITGVITVKGLVDREKGDFYTLTVVADDGGPKVDSTVKVYITVLDENDNSPRFDFTSDSAISVPEDCPVGQRVATVKARDPDAGSNGQVVFSLASGNIAGAFEIITSNDSIGEVFVAKPLDREELDHYILKVVASDRGTPPRKKDHILQVTILDVNDNPPVIESPFGYNVSVNENVGGGTSVVQVRATDRDIGINSVLSYYITEGNEDMTFRMDRISGEIATRPAPPDRERQNFYHLVVTVEDEGTPTLSATTHVYVTIVDENDNAPVFQQPHYEVVLDEGPDTINTSLITVQALDLDEGPNGTVTYAIVAGNIINTFRINKHTGVITAAKELDYEISHGRYTLIVTATDQCPILSHRLTSTTTVLVNVNDINDNVPTFPRDYEGPFDVTEGQPGPRVWTFLAHDRDSGPNGQVEYSVVDGDPLGEFVISPVEGVLRVRKDVELDRETIAFYNLTICARDRGVPPLSSTMLVGIRVLDINDNDPVLLNLPMNVTISENSPVSSFVAHVLASDADSGCNALLTFNITAGNRERAFFINATTGIVTVNRPLDRERIPEYRLTVSVKDNPENPRIARKDFDLLLVSLADENDNHPLFTEGTYQAEVMENSPAGTPLTVLNGPILALDADEDVYAVVTYQLLGTHSDLFVIDNSTGVVTVRSGIIIDREAFSPPFLELLLLAEDIGQLNGTAHLFITILDDNDNWPTFSPPTYTVHLLENCPPGFSVLQVTATDEDSGLNGELVYRIEAGAQDRFLIHPVTGVIRVGNATIDREEQESYRLTVVATDRGTVPLSGTAIVTILIDDINDSRPEFLNPIQTVSVLESAEPGTIIANVTAIDLDLNPKLEYHIISIVAKDDTDRLVPDQEDAFAVNINTGSVMVKSPLNRELVATYEVTLSVIDNASDLPEHSVSVPNAKLTVNILDVNDNTPQFKPFGITYYTERVLEGATPGTTLIAVAAVDPDKGLNGLITYTLLDLTPPGYVQLEDSSAGKVIANRTVDYEEVHWLNFTVRASDNGSPPRAAEIPVYLEIVDINDNNPIFDQPSYQEAVFEDIAVGTVILRVTATDADSGNFALIEYSLVDGEGKFAINPNTGDISVLSSLDREKKDHYILTALAKDNPGDVASNRRENSVQVVIRVLDVNDCRPQFSKPQFSTSVYENEPAGTSVITMLATDQDEGSNSQLTYSLEGPGMEAFSVDMDSGLVTTQRPLQSYERFNLTVVATDGGEPPLWGTTMLLVEVIDVNDNRPVFVRPPNGTILHIKEEIPLRSNVYEVYATDNDEGLNGAVRYSFLKTTGNRDWEYFTIDPISGLIQTAQRLDREKQAVYSLILVASDLGQPVPYETMQPLQVALEDIDDNEPLFVRPPKGSPQYQLLTVPEHSPRGTLVGNVTGAVDADEGPNAIVYYFIAAGDEDKNFHLQPDGRLLVLRDLDRETEATFSFIVKASSNRSWTPPRGPSPALDLLTDLTLQEVRVVLEDINDQPPRFTKAEYTAGVATDAKVGSELIQVLALDADIGNNSLVFYGILAIHYFRALANDSEDVGQVFTMGSVDGILRTFDLFMAYSPGYFVVDIVARDLAGHNDTAIIGIYILRDDQRVKIVINEIPDRVRGFEEEFIRLLSNITGAIVNTDDVQFHVDMKGRVNFAQTELLIHVVNRDTNRILDVDRVIQMIDENKEQLRNLFRNYNVLDVQPAISVQLPDDMSALQMAIIVLAILLFLAAMLFVLMNWYYRTIHKRKLKAIVAGSAGNRGFIDIMDMPNTNKYSFDGSNPVWLDPFCRNLELAAQAEHEDDLPENLSEIADLWNSPTRTHGTFGREPAAVKPDDDRYLRAAIQEYDNIAKLGQIIREGPIKGSLLKVVLEDYLRLKKLFAQRMVQKASSCHSSISELIHTDLEEEPGDHSPGQGSLRFRHKPPMELKGQDGIHMVHGSTGTLLATDLNSLPEDDQKGLDRSLETLTASEATAFERNARTESAKSTPLHKLRDVIMESPLEITEL.

The signal sequence occupies residues 1 to 23; it reads MRYSLVTCYAVLWLLMLVPGSWG. The Extracellular portion of the chain corresponds to 24–3064; that stretch reads QVNRLPFFTN…SVQLPDDMSA (3041 aa). 27 consecutive Cadherin domains span residues 34-132, 133-236, 237-348, 349-460, 461-561, 562-671, 672-784, 779-890, 891-995, 996-1102, 1103-1208, 1210-1313, 1314-1418, 1420-1527, 1529-1634, 1635-1744, 1745-1851, 1852-1959, 1960-2069, 2070-2174, 2175-2293, 2297-2402, 2403-2509, 2510-2611, 2614-2722, 2729-2846, and 2847-2975; these read HFFD…APTF, HNQP…DPIF, INLP…APEF, NSSE…RPIF, SQPL…VPTF, QKDA…PPTF, SKPA…APYY, KDAP…DPTF, RNLP…TPTF, FPAV…RPIF, LQSS…APVF, QQQY…AVQF, SNAS…SPRF, FTSD…PPVI, SPFG…APVF, QQPH…VPTF, PRDY…DPVL, LNLP…HPLF, TEGT…WPTF, SPPT…RPEF, LNPI…TPQF, GITY…NPIF, DQPS…RPQF, SKPQ…RPVF, PPNG…EPLF, SPQY…PPRF, and TKAE…EEEF. 2 N-linked (GlcNAc...) asparagine glycosylation sites follow: N155 and N206. Residues N349, N393, N434, N466, N472, N602, N694, N765, N810, N827, N941, N1001, N1018, N1171, N1282, N1315, N1473, N1534, N1651, N1667, N1818, N1857, N1889, N1902, N2014, N2050, N2129, N2168, N2195, N2263, N2357, and N2369 are each glycosylated (N-linked (GlcNAc...) asparagine). N-linked (GlcNAc...) asparagine glycans are attached at residues N2578, N2616, N2749, N2808, N2877, N2896, N2941, and N2981. Residues 3065 to 3085 traverse the membrane as a helical segment; it reads LQMAIIVLAILLFLAAMLFVL. Residues 3086 to 3354 lie on the Cytoplasmic side of the membrane; it reads MNWYYRTIHK…MESPLEITEL (269 aa).

Interacts with USH1C and USH1G. antiparallel heterodimer with PCDH15. Isoform C1: Interacts with CAMSAP3; leading to inhibit CAMSAP3 ability to induce microtubule bundle formation. As to expression, in adult animals relatively high levels of expression are found in testis, skeletal muscle, heart, eye and thymus, and lower expression in kidney, lung and brain. Found in the sensory hair cells of the inner ear.

Its subcellular location is the cell membrane. In terms of biological role, cadherins are calcium-dependent cell adhesion proteins. They preferentially interact with themselves in a homophilic manner in connecting cells. CDH23 is required for establishing and/or maintaining the proper organization of the stereocilia bundle of hair cells in the cochlea and the vestibule during late embryonic/early postnatal development. It is part of the functional network formed by USH1C, USH1G, CDH23 and MYO7A that mediates mechanotransduction in cochlear hair cells. Required for normal hearing. The protein is Cadherin-23 (Cdh23) of Mus musculus (Mouse).